The following is a 483-amino-acid chain: Protein P55 (483 aa).

A helical membrane pass occupies residues 342-359; sequence LTPVMALIIILVYYSIYG.

Its subcellular location is the host membrane. This Vitis vinifera (Grape) protein is Protein P55.